Consider the following 425-residue polypeptide: Serine--tRNA ligase (425 aa).

L-serine is bound at residue 233–235 (TAE). Residue 264-266 (RAE) participates in ATP binding. Glutamate 287 contributes to the L-serine binding site. 351–354 (EISS) serves as a coordination point for ATP. Position 387 (serine 387) interacts with L-serine.

The protein belongs to the class-II aminoacyl-tRNA synthetase family. Type-1 seryl-tRNA synthetase subfamily. In terms of assembly, homodimer. The tRNA molecule binds across the dimer.

The protein resides in the cytoplasm. It catalyses the reaction tRNA(Ser) + L-serine + ATP = L-seryl-tRNA(Ser) + AMP + diphosphate + H(+). It carries out the reaction tRNA(Sec) + L-serine + ATP = L-seryl-tRNA(Sec) + AMP + diphosphate + H(+). It participates in aminoacyl-tRNA biosynthesis; selenocysteinyl-tRNA(Sec) biosynthesis; L-seryl-tRNA(Sec) from L-serine and tRNA(Sec): step 1/1. In terms of biological role, catalyzes the attachment of serine to tRNA(Ser). Is also able to aminoacylate tRNA(Sec) with serine, to form the misacylated tRNA L-seryl-tRNA(Sec), which will be further converted into selenocysteinyl-tRNA(Sec). In Clostridium perfringens (strain 13 / Type A), this protein is Serine--tRNA ligase.